The primary structure comprises 537 residues: MTKYIFVTGGVVSSIGKGIVAASLGRLLKNRGLKVTIQKFDPYINIDPGTMSPYQHGEVYVTDDGAETDLDLGHYERFIDINLNKYSNVTTGKIYSEVLRKERKGEYLGATVQVIPHITDALKEKIKRAATTTDSDVIITEVGGTVGDIESLPFLEALRQMKADVGSENVMYIHTTLLPYLKAAGEMKTKPTQHSVKELRGLGIQPNMLVIRTEEPVEQGIKNKLAQFCDVNPEAVIESRDVEHLYQIPLNLQAQSMDQIVCDHLKLDVPQADMTEWSAMVDKVMNLKKTTRIALVGKYVELPDAYLSVVEALKHSGYANDAAIELDWINANDLTAENAKKLLGQADGIIVPGGFGQRGTEGKIQAIRYAREHDVPMLGICLGMQLTCVEFARHVLGMEKANSFELDPDTAYPIIDIMRDQIDIEDMGGTLRLGLYPCKLKAGSRAAAAYNNQEVVQRRHRHRYEFNNKFRQDFEAAGFVFSGVSPDNRLVEIVELPEKKFFVAAQYHPELQSRPNRPEELYTAFVTAAVKNKNQSL.

The segment at methionine 1–leucine 267 is amidoligase domain. Serine 13 provides a ligand contact to CTP. UTP is bound at residue serine 13. Serine 14–isoleucine 19 contributes to the ATP binding site. Tyrosine 54 lines the L-glutamine pocket. Position 71 (aspartate 71) interacts with ATP. Positions 71 and 141 each coordinate Mg(2+). CTP-binding positions include aspartate 148–glutamate 150, lysine 188–glutamine 193, and lysine 224. UTP-binding positions include lysine 188–glutamine 193 and lysine 224. Arginine 240–valine 242 contacts ATP. The Glutamine amidotransferase type-1 domain occupies arginine 292 to glutamine 535. Glycine 354 is an L-glutamine binding site. The Nucleophile; for glutamine hydrolysis role is filled by cysteine 381. L-glutamine contacts are provided by residues leucine 382–glutamine 385, glutamate 405, and arginine 463. Active-site residues include histidine 508 and glutamate 510.

It belongs to the CTP synthase family. Homotetramer.

The catalysed reaction is UTP + L-glutamine + ATP + H2O = CTP + L-glutamate + ADP + phosphate + 2 H(+). It carries out the reaction L-glutamine + H2O = L-glutamate + NH4(+). It catalyses the reaction UTP + NH4(+) + ATP = CTP + ADP + phosphate + 2 H(+). Its pathway is pyrimidine metabolism; CTP biosynthesis via de novo pathway; CTP from UDP: step 2/2. Its activity is regulated as follows. Allosterically activated by GTP, when glutamine is the substrate; GTP has no effect on the reaction when ammonia is the substrate. The allosteric effector GTP functions by stabilizing the protein conformation that binds the tetrahedral intermediate(s) formed during glutamine hydrolysis. Inhibited by the product CTP, via allosteric rather than competitive inhibition. Catalyzes the ATP-dependent amination of UTP to CTP with either L-glutamine or ammonia as the source of nitrogen. Regulates intracellular CTP levels through interactions with the four ribonucleotide triphosphates. In Streptococcus equi subsp. zooepidemicus (strain H70), this protein is CTP synthase.